The primary structure comprises 435 residues: Casein kinase I homolog 2 (435 aa).

The region spanning tyrosine 12–leucine 282 is the Protein kinase domain. ATP is bound by residues isoleucine 18 to isoleucine 26 and lysine 41. Aspartate 131 acts as the Proton acceptor in catalysis. Serine 361 is subject to Phosphoserine.

Belongs to the protein kinase superfamily. CK1 Ser/Thr protein kinase family. Casein kinase I subfamily.

The protein resides in the cytoplasm. It carries out the reaction L-seryl-[protein] + ATP = O-phospho-L-seryl-[protein] + ADP + H(+). It catalyses the reaction L-threonyl-[protein] + ATP = O-phospho-L-threonyl-[protein] + ADP + H(+). Its function is as follows. Casein kinases are operationally defined by their preferential utilization of acidic proteins such as caseins as substrates. May contribute to the regulation of morphology. The polypeptide is Casein kinase I homolog 2 (cki2) (Schizosaccharomyces pombe (strain 972 / ATCC 24843) (Fission yeast)).